Consider the following 357-residue polypeptide: Protein MGF 360-8L (357 aa).

It belongs to the asfivirus MGF 360 family.

Plays a role in virus cell tropism, and may be required for efficient virus replication in macrophages. The chain is Protein MGF 360-8L from African swine fever virus (isolate Tick/South Africa/Pretoriuskop Pr4/1996) (ASFV).